A 216-amino-acid chain; its full sequence is MPSFADLTTENGLVELNKFVSDKTYIVGFVPSSADVQAFNLVKTAPCATKYPHAARWFNTIASYSAAEQGQFEKVTETVTIAAPAAPKADDDVDLFGSDDEDDEEYERQLEERRKKAMEHKKPKETVIAKSSILLDVKPWDDETDMVELEKCVRSIEMDGLVWGASKLVAVGYGIKKLVINLVVEDLKVSTDELEEKIKDFEDYVQSVDVAAFNKI.

Belongs to the EF-1-beta/EF-1-delta family. In terms of assembly, EF-1 is composed of 4 subunits: alpha, beta, delta, and gamma. Interacts with actin.

The protein resides in the cytoplasm. EF-1-beta and EF-1-delta stimulate the exchange of GDP bound to EF-1-alpha to GTP. In Dictyostelium discoideum (Social amoeba), this protein is Elongation factor 1-beta (efa1B).